The following is a 159-amino-acid chain: Phosphopantetheine adenylyltransferase (159 aa).

Position 10 (Thr-10) interacts with substrate. ATP is bound by residues 10–11 and His-18; that span reads TF. Positions 42, 74, and 88 each coordinate substrate. ATP contacts are provided by residues 89–91, Glu-99, and 124–130; these read GLR and WSFISSS.

This sequence belongs to the bacterial CoaD family. As to quaternary structure, homohexamer. Mg(2+) serves as cofactor.

Its subcellular location is the cytoplasm. The catalysed reaction is (R)-4'-phosphopantetheine + ATP + H(+) = 3'-dephospho-CoA + diphosphate. Its pathway is cofactor biosynthesis; coenzyme A biosynthesis; CoA from (R)-pantothenate: step 4/5. Reversibly transfers an adenylyl group from ATP to 4'-phosphopantetheine, yielding dephospho-CoA (dPCoA) and pyrophosphate. This chain is Phosphopantetheine adenylyltransferase, found in Klebsiella pneumoniae (strain 342).